The primary structure comprises 352 residues: Endoplasmic reticulum GDP-fucose transporter (352 aa).

The next 10 membrane-spanning stretches (helical) occupy residues 9–29 (LGMLFVFIGCCSNVVFLELII), 34–54 (GAGNLITFAQFLFIALEGLVF), 70–90 (YVILVALFFGANVCNNYAFNF), 96–116 (LHMIFRSGSLMANMIMGIVLL), 126–146 (SSVAMITAGIILCTLVSSGDV), 163–183 (FFWWTVGIGLLTIALLVTAYM), 201–221 (ALFFTHMLPLPGFLIMAGNIV), 249–271 (LMLFYLLCNVVTQYVCISAVYVL), 276–298 (ASLTVTLVVTLRKFVSLLFSIIY), and 305–325 (LNHWVGTILVFFGTILFANVI). A Prevents secretion from ER motif is present at residues 350-352 (KVE).

This sequence belongs to the nucleotide-sugar transporter family. SLC35B subfamily.

It localises to the endoplasmic reticulum membrane. Sugar transporter that specifically mediates the transport of UDP-N-acetylglucosamine (UDP-GlcNAc), GDP-fucose and UDP-xylose. Functions redundantly with Gfr in the O-fucosylation of Notch, positively regulating Notch signaling. Involved in the biosynthesis of heparan sulfate-glycosaminoglycan (HS-GAG) and in Dpp signaling in the wing imaginal disk. The sequence is that of Endoplasmic reticulum GDP-fucose transporter from Drosophila melanogaster (Fruit fly).